The chain runs to 126 residues: UPF0102 protein Cphamn1_0017 (126 aa).

Belongs to the UPF0102 family.

The polypeptide is UPF0102 protein Cphamn1_0017 (Chlorobium phaeobacteroides (strain BS1)).